Reading from the N-terminus, the 546-residue chain is G1/S-specific cyclin CLN1 (546 aa).

The segment at 224-265 (SNGKEWSCKRKSQSSDDSDATVEEHISSSPQSTGLDGDTTTM) is disordered.

The protein belongs to the cyclin family.

Essential for the control of the cell cycle at the G1/S (start) transition. Interacts with the CDC28 protein kinase to form MPF. In Saccharomyces cerevisiae (strain ATCC 204508 / S288c) (Baker's yeast), this protein is G1/S-specific cyclin CLN1 (CLN1).